The sequence spans 137 residues: Large ribosomal subunit protein uL16 (137 aa).

It belongs to the universal ribosomal protein uL16 family. In terms of assembly, part of the 50S ribosomal subunit.

Its function is as follows. Binds 23S rRNA and is also seen to make contacts with the A and possibly P site tRNAs. This Halorhodospira halophila (strain DSM 244 / SL1) (Ectothiorhodospira halophila (strain DSM 244 / SL1)) protein is Large ribosomal subunit protein uL16.